The sequence spans 481 residues: Glutamate--tRNA ligase (481 aa).

A 'HIGH' region motif is present at residues 9-19 (PSPTGNLHIGT). The Zn(2+) site is built by Cys98, Cys100, His125, and Asp127. The short motif at 248-252 (KLSKR) is the 'KMSKS' region element. Lys251 contacts ATP.

Belongs to the class-I aminoacyl-tRNA synthetase family. Glutamate--tRNA ligase type 1 subfamily. In terms of assembly, monomer. It depends on Zn(2+) as a cofactor.

It is found in the cytoplasm. It carries out the reaction tRNA(Glu) + L-glutamate + ATP = L-glutamyl-tRNA(Glu) + AMP + diphosphate. In terms of biological role, catalyzes the attachment of glutamate to tRNA(Glu) in a two-step reaction: glutamate is first activated by ATP to form Glu-AMP and then transferred to the acceptor end of tRNA(Glu). This Synechococcus elongatus (strain ATCC 33912 / PCC 7942 / FACHB-805) (Anacystis nidulans R2) protein is Glutamate--tRNA ligase.